A 388-amino-acid chain; its full sequence is Interferon alpha/beta receptor 1b (388 aa).

2 Fibronectin type-III domains span residues 5–102 (LPQP…FCPD) and 109–211 (PPSR…TEGD). Residues 217 to 237 (IFLYFLVSMMVCFLLVLLSSY) form a helical membrane-spanning segment. A disordered region spans residues 308-357 (TAPPSELEQDSGRHIRQDSGDSGIYSTEGGSAQQGRSGGEPIRRDQEVDS). The span at 317–326 (DSGRHIRQDS) shows a compositional bias: basic and acidic residues. Polar residues predominate over residues 331–342 (IYSTEGGSAQQG).

This sequence belongs to the type II cytokine receptor family. Heterodimer with IFNAR2; forming the receptor for type I interferon.

Its subcellular location is the cell membrane. The protein resides in the cytoplasm. The protein localises to the perinuclear region. Functionally, together with IFNAR2, forms the heterodimeric receptor for type I interferons (including interferons alpha, beta, epsilon, omega and kappa). Type I interferon binding activates the JAK-STAT signaling cascade, resulting in transcriptional activation or repression of interferon-regulated genes that encode the effectors of the interferon response. Mechanistically, type I interferon-binding brings the IFNAR1 and IFNAR2 subunits into close proximity with one another, driving their associated Janus kinases (JAKs) (TYK2 bound to IFNAR1 and JAK1 bound to IFNAR2) to cross-phosphorylate one another. The activated kinases phosphorylate specific tyrosine residues on the intracellular domains of IFNAR1 and IFNAR2, forming docking sites for the STAT transcription factors. STAT proteins are then phosphorylated by the JAKs, promoting their translocation into the nucleus to regulate expression of interferon-regulated genes. In Oncorhynchus mykiss (Rainbow trout), this protein is Interferon alpha/beta receptor 1b.